Reading from the N-terminus, the 102-residue chain is MQKIRKGDKVVVLTGKDKGRSGEVIQVMPKEDRAVVQGINVVKRHQRQTQTQEAGIINKEASVHLSNLAIADKDGKPTRVGFSVVDGKKVRVAKRSGEVIDG.

It belongs to the universal ribosomal protein uL24 family. In terms of assembly, part of the 50S ribosomal subunit.

In terms of biological role, one of two assembly initiator proteins, it binds directly to the 5'-end of the 23S rRNA, where it nucleates assembly of the 50S subunit. Its function is as follows. One of the proteins that surrounds the polypeptide exit tunnel on the outside of the subunit. The chain is Large ribosomal subunit protein uL24 from Allorhizobium ampelinum (strain ATCC BAA-846 / DSM 112012 / S4) (Agrobacterium vitis (strain S4)).